The primary structure comprises 432 residues: Ribosomal protein uS12 methylthiotransferase RimO (432 aa).

The region spanning 4-122 is the MTTase N-terminal domain; it reads NTIDIITLGC…LLADLGKAYK (119 aa). 6 residues coordinate [4Fe-4S] cluster: Cys-13, Cys-51, Cys-85, Cys-146, Cys-150, and Cys-153. Positions 132 to 363 constitute a Radical SAM core domain; that stretch reads TTPHHYAYLK…MALQQEIAGE (232 aa). The TRAM domain maps to 366–432; that stretch reads QTKIGKEFKV…DDFDLYASIL (67 aa).

This sequence belongs to the methylthiotransferase family. RimO subfamily. It depends on [4Fe-4S] cluster as a cofactor.

It is found in the cytoplasm. It carries out the reaction L-aspartate(89)-[ribosomal protein uS12]-hydrogen + (sulfur carrier)-SH + AH2 + 2 S-adenosyl-L-methionine = 3-methylsulfanyl-L-aspartate(89)-[ribosomal protein uS12]-hydrogen + (sulfur carrier)-H + 5'-deoxyadenosine + L-methionine + A + S-adenosyl-L-homocysteine + 2 H(+). Its function is as follows. Catalyzes the methylthiolation of an aspartic acid residue of ribosomal protein uS12. This is Ribosomal protein uS12 methylthiotransferase RimO from Phocaeicola vulgatus (strain ATCC 8482 / DSM 1447 / JCM 5826 / CCUG 4940 / NBRC 14291 / NCTC 11154) (Bacteroides vulgatus).